Consider the following 208-residue polypeptide: N-(5'-phosphoribosyl)anthranilate isomerase (208 aa).

The protein belongs to the TrpF family.

It carries out the reaction N-(5-phospho-beta-D-ribosyl)anthranilate = 1-(2-carboxyphenylamino)-1-deoxy-D-ribulose 5-phosphate. It participates in amino-acid biosynthesis; L-tryptophan biosynthesis; L-tryptophan from chorismate: step 3/5. The sequence is that of N-(5'-phosphoribosyl)anthranilate isomerase from Methanococcus maripaludis (strain C5 / ATCC BAA-1333).